The primary structure comprises 498 residues: NADPH:adrenodoxin oxidoreductase, mitochondrial (498 aa).

Residues 1 to 37 constitute a mitochondrion transit peptide; sequence MSTHKAALCKVQILKLFLISARCVRITRFYGVCGLST. Ala54, Glu75, Leu83, and Val119 together coordinate FAD. Residues 190-193, 234-235, and Glu246 contribute to the NADP(+) site; these read QGNV and RR. Residues Trp404 and 411–413 contribute to the FAD site; that span reads GVI. Gly411 contacts NADP(+). Residues 469-488 show a composition bias toward basic and acidic residues; that stretch reads DSEETRRGETRGKPREKMLD. Residues 469–489 are disordered; sequence DSEETRRGETRGKPREKMLDV.

This sequence belongs to the ferredoxin--NADP reductase type 1 family. It depends on FAD as a cofactor.

It localises to the mitochondrion inner membrane. It carries out the reaction 2 reduced [adrenodoxin] + NADP(+) + H(+) = 2 oxidized [adrenodoxin] + NADPH. The protein operates within steroid metabolism; cholesterol metabolism. Serves as the first electron transfer protein in all the mitochondrial P450 systems including cholesterol side chain cleavage in all steroidogenic tissues, steroid 11-beta hydroxylation in the adrenal cortex, 25-OH-vitamin D3-24 hydroxylation in the kidney, and sterol C-27 hydroxylation in the liver. In Salvelinus fontinalis (Brook trout), this protein is NADPH:adrenodoxin oxidoreductase, mitochondrial (fdxr).